Consider the following 804-residue polypeptide: ATP-dependent RNA helicase dbp4 (804 aa).

Positions 1–24 (MAPANAPRNGKYAKSSQRTLKRKR) are disordered. A Q motif motif is present at residues 46–74 (KAFTDLPLSEPTLSGLSASHYKTLTDIQS). One can recognise a Helicase ATP-binding domain in the interval 77–251 (VSHALKGRDI…RLSLQDPEYV (175 aa)). 90–97 (AKTGSGKT) contributes to the ATP binding site. Positions 199-202 (DEAD) match the DEAD box motif. Positions 277-436 (KLDILWSFIR…SIKNQLQNMC (160 aa)) constitute a Helicase C-terminal domain. Disordered stretches follow at residues 493–541 (GDDT…DRMF), 589–615 (DKQL…KDVK), and 695–804 (LADV…GLLG). Over residues 521-541 (DEKKSKKKDAPQVRTKYDRMF) the composition is skewed to basic and acidic residues. The segment covering 695-705 (LADVEDKELVK) has biased composition (basic and acidic residues). Residues 706-715 (QKRREKKEKR) are compositionally biased toward basic residues.

This sequence belongs to the DEAD box helicase family. DDX10/DBP4 subfamily. As to quaternary structure, interacts with the U3 and U14 snoRNAs. Associates with pre-ribosomal complexes.

The protein resides in the nucleus. It is found in the nucleolus. It carries out the reaction ATP + H2O = ADP + phosphate + H(+). In terms of biological role, ATP-dependent RNA helicase required for ribosome biogenesis. Involved in the release of U14 snoRNA in pre-ribosomal complexes. Required for pre-rRNA cleavage at site A2. The protein is ATP-dependent RNA helicase dbp4 (dbp4) of Aspergillus terreus (strain NIH 2624 / FGSC A1156).